An 801-amino-acid chain; its full sequence is Putative mRNA-capping enzyme P5 (801 aa).

Belongs to the phytoreovirus protein P5 family.

The protein localises to the virion. It localises to the host cytoplasm. It carries out the reaction a 5'-end diphospho-ribonucleoside in mRNA + GTP + H(+) = a 5'-end (5'-triphosphoguanosine)-ribonucleoside in mRNA + diphosphate. It functions in the pathway mRNA processing; mRNA capping. Enzyme involved in mRNA capping (Potential). Binds to GTP and might have guanylyltransferase activity. Together with the RNA-directed RNA polymerase P1 and protein P7, forms an transcriptional complex positioned near the channels situated at each of the five-fold vertices of the core. The polypeptide is Putative mRNA-capping enzyme P5 (Alopecurus aequalis (Barnyard grass)).